The sequence spans 174 residues: Small ribosomal subunit protein uS5 (174 aa).

Residues 17 to 80 (WQERVVQIRR…ADGKKHLIDV (64 aa)) enclose the S5 DRBM domain.

The protein belongs to the universal ribosomal protein uS5 family. As to quaternary structure, part of the 30S ribosomal subunit. Contacts proteins S4 and S8.

Its function is as follows. With S4 and S12 plays an important role in translational accuracy. In terms of biological role, located at the back of the 30S subunit body where it stabilizes the conformation of the head with respect to the body. This chain is Small ribosomal subunit protein uS5, found in Thermosynechococcus vestitus (strain NIES-2133 / IAM M-273 / BP-1).